The following is a 158-amino-acid chain: 6,7-dimethyl-8-ribityllumazine synthase (158 aa).

5-amino-6-(D-ribitylamino)uracil contacts are provided by residues phenylalanine 22, 57–59 (SYE), and 81–83 (TVI). Residue histidine 89 is the Proton donor of the active site. Phenylalanine 114 contacts 5-amino-6-(D-ribitylamino)uracil. A (2S)-2-hydroxy-3-oxobutyl phosphate-binding site is contributed by arginine 128.

It belongs to the DMRL synthase family. In terms of assembly, forms an icosahedral capsid composed of 60 subunits, arranged as a dodecamer of pentamers.

It catalyses the reaction (2S)-2-hydroxy-3-oxobutyl phosphate + 5-amino-6-(D-ribitylamino)uracil = 6,7-dimethyl-8-(1-D-ribityl)lumazine + phosphate + 2 H2O + H(+). Its pathway is cofactor biosynthesis; riboflavin biosynthesis; riboflavin from 2-hydroxy-3-oxobutyl phosphate and 5-amino-6-(D-ribitylamino)uracil: step 1/2. Functionally, catalyzes the formation of 6,7-dimethyl-8-ribityllumazine by condensation of 5-amino-6-(D-ribitylamino)uracil with 3,4-dihydroxy-2-butanone 4-phosphate. This is the penultimate step in the biosynthesis of riboflavin. The polypeptide is 6,7-dimethyl-8-ribityllumazine synthase (Blochmanniella pennsylvanica (strain BPEN)).